The primary structure comprises 341 residues: Ribosomal RNA small subunit methyltransferase H (341 aa).

S-adenosyl-L-methionine is bound by residues 47 to 49 (GGY), D64, F97, D109, and Q116.

This sequence belongs to the methyltransferase superfamily. RsmH family.

Its subcellular location is the cytoplasm. It catalyses the reaction cytidine(1402) in 16S rRNA + S-adenosyl-L-methionine = N(4)-methylcytidine(1402) in 16S rRNA + S-adenosyl-L-homocysteine + H(+). Its function is as follows. Specifically methylates the N4 position of cytidine in position 1402 (C1402) of 16S rRNA. The polypeptide is Ribosomal RNA small subunit methyltransferase H (Allorhizobium ampelinum (strain ATCC BAA-846 / DSM 112012 / S4) (Agrobacterium vitis (strain S4))).